Reading from the N-terminus, the 147-residue chain is Small ribosomal subunit protein uS12 (147 aa).

It belongs to the universal ribosomal protein uS12 family. In terms of assembly, part of the 30S ribosomal subunit.

In terms of biological role, with S4 and S5 plays an important role in translational accuracy. Located at the interface of the 30S and 50S subunits. The chain is Small ribosomal subunit protein uS12 from Pyrobaculum calidifontis (strain DSM 21063 / JCM 11548 / VA1).